A 670-amino-acid chain; its full sequence is Solute carrier organic anion transporter family member 1A6 (670 aa).

Over 1–20 the chain is Cytoplasmic; the sequence is MGEPEKRAGTHGIRCFAKIK. The chain crosses the membrane as a helical span at residues 21–40; that stretch reads VFLLALTWAYASKALSATYM. Residues 41–59 are Extracellular-facing; sequence NSMLTQIERRFNISTSIVG. An N-linked (GlcNAc...) asparagine glycan is attached at asparagine 52. Residues 60–80 traverse the membrane as a helical segment; it reads LINGSFEVGNLLLIIFVSYFG. Topologically, residues 81 to 86 are cytoplasmic; sequence RKRHRP. Residues 87 to 111 form a helical membrane-spanning segment; it reads IMIGIGCAVMGLGCFIISLPHFLMG. Over 112-155 the chain is Extracellular; sequence RYEYETTISPTSNLSSNSFLCMENRTQTLKPTQDPAECVKEMKS. N-linked (GlcNAc...) asparagine glycosylation is found at asparagine 124 and asparagine 135. Residues 156 to 184 traverse the membrane as a helical segment; it reads LMWIYVLVGNIIRGIGETPIMPLGISYIE. Residues 185 to 203 are Cytoplasmic-facing; it reads DFAKSENSPFYIGILEVGK. Residues 204 to 224 traverse the membrane as a helical segment; sequence ITGPIAAIWLGSFCATIYVDM. Residues 225–242 lie on the Extracellular side of the membrane; sequence GSVNTDDLTITPTDTRCV. The chain crosses the membrane as a helical span at residues 243–267; that stretch reads GAWWIGFLVCAGLNILISIPFFFFP. The Cytoplasmic segment spans residues 268-311; the sequence is KTFPKEGPEDMANETKNDEGDKHREKAKEEKRGITKDFFLFMKS. The tract at residues 276-295 is disordered; that stretch reads EDMANETKNDEGDKHREKAK. The chain crosses the membrane as a helical span at residues 312-333; sequence LSCNPIYMLCVLTSVLQVNGFV. At 334–353 the chain is on the extracellular side; it reads SIFTFKPKYLEHHYGKSSSE. The chain crosses the membrane as a helical span at residues 354–377; it reads AIFLMGLYTLPSVCVGYLISGFIM. Topologically, residues 378–381 are cytoplasmic; it reads KKFK. The chain crosses the membrane as a helical span at residues 382–405; it reads ITLKKAAFISYCLGMSECLLSLCN. Topologically, residues 406–513 are extracellular; that stretch reads FMLTCDNVPI…PDCANKLQYF (108 aa). A Kazal-like domain is found at 433-488; sequence NTVLADCNTRCSCLTKTWDPVCGDNGLAYITPCLAGCEKSVGSGINMVLQDCSCIQ. Disulfide bonds link cysteine 439-cysteine 469, cysteine 445-cysteine 465, and cysteine 454-cysteine 486. An N-linked (GlcNAc...) asparagine glycan is attached at asparagine 492. The chain crosses the membrane as a helical span at residues 514–536; the sequence is LIITVFCSFFYSLSLIPGYMIFL. Residues 537-545 are Cytoplasmic-facing; sequence RCMKSEEKS. A helical transmembrane segment spans residues 546-571; that stretch reads LGIGLQAFCMRILGGILAPIYFGVLI. At 572–605 the chain is on the extracellular side; the sequence is DRTCLHWGTQKCGEPGACRTYEINSFRSIYLGLP. The chain crosses the membrane as a helical span at residues 606–623; sequence AALRGSSYLPAFFILRLM. Over 624 to 670 the chain is Cytoplasmic; that stretch reads RKFQFPGDINSPVTDHVEMMLTEKESEHTDVHRSPQVENDGELKTKL. A Phosphoserine modification is found at serine 634. Residues 647–670 are disordered; the sequence is KESEHTDVHRSPQVENDGELKTKL.

Belongs to the organo anion transporter (TC 2.A.60) family.

Its subcellular location is the cell membrane. Functionally, may mediate the Na(+)-independent transport of organic anions. The polypeptide is Solute carrier organic anion transporter family member 1A6 (Slco1a6) (Rattus norvegicus (Rat)).